Here is a 126-residue protein sequence, read N- to C-terminus: Large ribosomal subunit protein bL17 (126 aa).

It belongs to the bacterial ribosomal protein bL17 family. As to quaternary structure, part of the 50S ribosomal subunit. Contacts protein L32.

The chain is Large ribosomal subunit protein bL17 from Coxiella burnetii (strain CbuK_Q154) (Coxiella burnetii (strain Q154)).